The following is a 329-amino-acid chain: AUGMIN subunit 7 (329 aa).

The stretch at 169 to 197 forms a coiled coil; that stretch reads DVSELETKLSEQAKILSNLQQKVDDLAAK.

In terms of assembly, part of the augmin complex composed of 8 subunits. The complex acts on microtubules and interacts with gamma-tubulin in spindles and the phragmoplast.

It localises to the cytoplasm. It is found in the cytoskeleton. The protein resides in the spindle. The protein localises to the phragmoplast. Contributes to the assembly of the acentrosomal spindle and phragmoplast microtubule arrays as part of the augmin complex. Regulates the association of gamma-tubulin with the spindle and phragmoplast microtubules. The sequence is that of AUGMIN subunit 7 from Arabidopsis thaliana (Mouse-ear cress).